The following is a 305-amino-acid chain: Mas-related G-protein coupled receptor member A7 (305 aa).

The Extracellular portion of the chain corresponds to 1 to 17 (MDETSPRSIDIESLIPN). Residues 18-38 (LMIIIFGLVGLTGNAIVLWLL) traverse the membrane as a helical segment. At 39-46 (GFCLHRNA) the chain is on the cytoplasmic side. Residues 47 to 67 (FLVYILNLALADFLFLLCHFI) traverse the membrane as a helical segment. The Extracellular segment spans residues 68-81 (NSAMFLLKVPIPNG). A helical membrane pass occupies residues 82-102 (IFVYCFYTIKMVLYITGLSML). The Cytoplasmic portion of the chain corresponds to 103 to 129 (SAISTERCLSVLCPIWYHCRRPEHTST). Residues 130-150 (VMCAVIWIFSVLICILKEYFC) form a helical membrane-spanning segment. At 151-167 (DFFGTKLGNYYVCQASN) the chain is on the extracellular side. Residues 168–188 (FFMGAYLMFLFVVLCLSTLAL) traverse the membrane as a helical segment. The Cytoplasmic segment spans residues 189–211 (LARLFCGAEKMKFTRLFVTIMLT). Residues 212–232 (ILVFLLCGLPWGFFWFLLIWI) form a helical membrane-spanning segment. Over 233–244 (KGGFSVLDYRLY) the chain is Extracellular. A helical transmembrane segment spans residues 245-265 (LASIVLTVVNSCANPIIYFFV). Topologically, residues 266–305 (GSFRHRLKHQTLKMVLQSALQDTPETHENMVEMSRIKAEQ) are cytoplasmic.

This sequence belongs to the G-protein coupled receptor 1 family. Mas subfamily. In terms of tissue distribution, expressed in a subset of sensory neurons that includes nociceptors. Expressed in the subclass of non-peptidergic sensory neurons that are IB4(+) and VR1(-).

The protein resides in the cell membrane. Functionally, orphan receptor. May be a receptor for RFamide-family neuropeptides such as NPFF and NPAF, which are analgesic in vivo. May regulate nociceptor function and/or development, including the sensation or modulation of pain. In Mus musculus (Mouse), this protein is Mas-related G-protein coupled receptor member A7 (Mrgpra7).